We begin with the raw amino-acid sequence, 240 residues long: Allene oxide cyclase, chloroplastic (240 aa).

A chloroplast-targeting transit peptide spans 1 to 49 (MAAAAPSRVSVRAAAPGQTGGFAKIRPQVVVAAAARSAGVSGRRARSVR).

This sequence belongs to the allene oxide cyclase family.

The protein resides in the plastid. The protein localises to the chloroplast. The enzyme catalyses (9Z,13S,15Z)-12,13-epoxyoctadeca-9,11,15-trienoate = (9S,13S,15Z)-12-oxophyto-10,15-dienoate. The protein operates within lipid metabolism; polyunsaturated fatty acid biosynthesis. Involved in the production of 12-oxo-phytodienoic acid (OPDA), a precursor of jasmonic acid (JA). Required for the production of JA in response to wounding. Necessary for flower and coleoptile development regulation by light, including blue (BL), red (RL) and far red (FR) lights. Involved in the auxin-mediated signaling pathway leading to growth stimulation. Essential for photodestruction of phyA upon activation by RL and FR. Implicated in responses to salt stress (NaCl). In terms of biological role, confers resistance to incompatible strains of the blast fungus Magnaporthe grisea, jasmonic acid (JA) thus playing a significant role in the resistance to fungal infection. Implicated in riboflavin-induced resistance to the sheath blight Rhizoctonia solani. Required for Pseudomonas fluorescens-mediated JA-dependent induced systemic resistance (ISR). Confers some resistance, independently of the JA pathway but probably via OPDA accumulation, to brown planthopper (BPH, Nilaparvata lugens), a destructive, monophagous, piercing-sucking insect, mainly by reducing its feeding activity and survival rate. Triggers resistance to the chewing insect striped stem borer (SSB) Chilo suppressalis, to the root hemiparasite witchweed Striga hermonthica, and to the root feeder insect rice water weevil Lissorhoptrus oryzophilus, in a JA-dependent manner, by attenuating both the growth mass and growth rate of caterpillars. This is Allene oxide cyclase, chloroplastic from Oryza sativa subsp. indica (Rice).